Consider the following 539-residue polypeptide: T-complex protein 1 subunit zeta (539 aa).

The protein belongs to the TCP-1 chaperonin family. As to quaternary structure, heterooligomeric complex of about 850 to 900 kDa that forms two stacked rings, 12 to 16 nm in diameter.

The protein resides in the cytoplasm. Functionally, molecular chaperone; assists the folding of proteins upon ATP hydrolysis. Known to play a role, in vitro, in the folding of actin and tubulin. The protein is T-complex protein 1 subunit zeta (cct-6) of Caenorhabditis elegans.